The following is a 501-amino-acid chain: ATP synthase subunit alpha (501 aa).

169-176 (GDRQTGKT) contributes to the ATP binding site.

It belongs to the ATPase alpha/beta chains family. As to quaternary structure, F-type ATPases have 2 components, CF(1) - the catalytic core - and CF(0) - the membrane proton channel. CF(1) has five subunits: alpha(3), beta(3), gamma(1), delta(1), epsilon(1). CF(0) has three main subunits: a(1), b(2) and c(9-12). The alpha and beta chains form an alternating ring which encloses part of the gamma chain. CF(1) is attached to CF(0) by a central stalk formed by the gamma and epsilon chains, while a peripheral stalk is formed by the delta and b chains.

It localises to the cell membrane. The catalysed reaction is ATP + H2O + 4 H(+)(in) = ADP + phosphate + 5 H(+)(out). In terms of biological role, produces ATP from ADP in the presence of a proton gradient across the membrane. The alpha chain is a regulatory subunit. The polypeptide is ATP synthase subunit alpha (Streptococcus pneumoniae serotype 2 (strain D39 / NCTC 7466)).